A 147-amino-acid chain; its full sequence is Hemoglobin subunit beta (147 aa).

At valine 2 the chain carries N-acetylvaline. Residues 3–147 (HLTGEEKAAV…VANALAHKYH (145 aa)) form the Globin domain. Residue threonine 13 is modified to Phosphothreonine. Serine 45 carries the phosphoserine modification. N6-acetyllysine is present on lysine 60. Heme b is bound at residue histidine 64. N6-acetyllysine is present on lysine 83. Histidine 93 is a heme b binding site. Cysteine 94 carries the S-nitrosocysteine modification. Position 145 is an N6-acetyllysine (lysine 145).

Belongs to the globin family. In terms of assembly, heterotetramer of two alpha chains and two beta chains. As to expression, red blood cells.

In terms of biological role, involved in oxygen transport from the lung to the various peripheral tissues. This Aotus azarae (Azara's night monkey) protein is Hemoglobin subunit beta (HBB).